We begin with the raw amino-acid sequence, 149 residues long: Squidulin (149 aa).

At A1 the chain carries N-acetylalanine. 4 EF-hand domains span residues K7–T42, P43–P78, D80–E115, and L117–K149. Residues D20, D22, D24, Q26, E31, D56, D58, N60, T62, E67, D93, D95, N97, E104, D130, D132, D134, M136, and E141 each contribute to the Ca(2+) site.

Belongs to the calmodulin family.

Its function is as follows. Not known. This protein has four functional calcium-binding sites. This is Squidulin from Doryteuthis pealeii (Longfin inshore squid).